The sequence spans 111 residues: MGQFTVVSLGLLAMFLSLSGAKGDNCPASWISRNGVCNKLFPDRKTWLEAEKRTWKWSDRTSANYFSWNQGEPNDVQDNENCVHLWAPSGYLKWNDEPCASLHPFICQYKL.

Residues 1–23 (MGQFTVVSLGLLAMFLSLSGAKG) form the signal peptide. Cysteine 26 and cysteine 37 are joined by a disulfide. The C-type lectin domain maps to 33–108 (RNGVCNKLFP…CASLHPFICQ (76 aa)). A Mannose-binding motif is present at residues 72 to 74 (EPN). Residues glutamate 80, asparagine 95, and aspartate 96 each contribute to the Ca(2+) site. Cysteine 82 and cysteine 99 form a disulfide bridge.

This sequence belongs to the true venom lectin family. In terms of tissue distribution, expressed by the venom gland.

Its subcellular location is the secreted. Mannose-binding lectin which recognizes specific carbohydrate structures and agglutinates a variety of animal cells by binding to cell-surface glycoproteins and glycolipids. May be a calcium-dependent lectin. The protein is C-type lectin lectoxin-Enh1 of Pseudoferania polylepis (Macleay's water snake).